A 266-amino-acid polypeptide reads, in one-letter code: Cyclin-C (266 aa).

The region spanning 47 to 151 is the Cyclin N-terminal domain; sequence IIQVLGEQLK…LLENLDCCLI (105 aa).

The protein belongs to the cyclin family. Cyclin C subfamily. As to quaternary structure, component of the Cdk8 module of the Mediator complex.

It is found in the nucleus. In terms of biological role, component of the Mediator complex, a coactivator involved in regulated gene transcription of nearly all RNA polymerase II-dependent genes. Mediator functions as a bridge to convey information from gene-specific regulatory proteins to the basal RNA polymerase II transcription machinery. Mediator is recruited to promoters by direct interactions with regulatory proteins and serves as a scaffold for the assembly of a functional preinitiation complex with RNA polymerase II and the general transcription factors. Binds to and activates cyclin-dependent kinase Cdk8 that phosphorylates the CTD (C-terminal domain) of the large subunit of RNA polymerase II (RNAp II), which may inhibit the formation of a transcription initiation complex. In Anopheles gambiae (African malaria mosquito), this protein is Cyclin-C (CycC).